Here is a 103-residue protein sequence, read N- to C-terminus: uncharacterized protein (103 aa).

The CHCH domain maps to 10–63 (FPECDHLKQIYDKCFTEFFQKFITPNYRHQYAVNPCERLHDVYKRCVEERLATQ). 2 consecutive short sequence motifs (cx9C motif) follow at residues 13-23 (CDHLKQIYDKC) and 45-55 (CERLHDVYKRC). 2 disulfides stabilise this stretch: Cys-13–Cys-55 and Cys-23–Cys-45. The segment covering 80-90 (TDDDKLKDRQN) has biased composition (basic and acidic residues). The disordered stretch occupies residues 80-103 (TDDDKLKDRQNNQKTNSENKCSSS). Polar residues predominate over residues 91 to 103 (NQKTNSENKCSSS).

This sequence belongs to the TRIAP1/MDM35 family.

This is an uncharacterized protein from Caenorhabditis elegans.